The primary structure comprises 968 residues: Sorting nexin-13 (968 aa).

In terms of domain architecture, PXA spans 97–284; sequence ANIIDEPLQQ…YVIWMIRDSN (188 aa). The 124-residue stretch at 373 to 496 folds into the RGS domain; it reads PLDSILVDNV…RKVYELMLRD (124 aa). Residues 570-691 form the PX domain; sequence YADYDPYAVA…DFLENKAYSK (122 aa). Positions 612, 614, 639, and 653 each coordinate a 1,2-diacyl-sn-glycero-3-phospho-(1D-myo-inositol-3-phosphate).

Belongs to the sorting nexin family.

It is found in the early endosome membrane. In terms of biological role, may be involved in several stages of intracellular trafficking. May play a role in endosome homeostasis. Acts as a GAP for Galphas. The sequence is that of Sorting nexin-13 (SNX13) from Homo sapiens (Human).